Consider the following 441-residue polypeptide: Ribulose bisphosphate carboxylase large chain (441 aa).

Residue lysine 4 is modified to N6,N6,N6-trimethyllysine. Asparagine 113 and threonine 163 together coordinate substrate. Lysine 165 (proton acceptor) is an active-site residue. Lysine 167 contributes to the substrate binding site. Mg(2+) is bound by residues lysine 191, aspartate 193, and glutamate 194. Lysine 191 carries the N6-carboxylysine modification. The active-site Proton acceptor is the histidine 284. Arginine 285, histidine 317, and serine 369 together coordinate substrate.

The protein belongs to the RuBisCO large chain family. Type I subfamily. In terms of assembly, heterohexadecamer of 8 large chains and 8 small chains; disulfide-linked. The disulfide link is formed within the large subunit homodimers. Requires Mg(2+) as cofactor. The disulfide bond which can form in the large chain dimeric partners within the hexadecamer appears to be associated with oxidative stress and protein turnover.

It is found in the plastid. Its subcellular location is the chloroplast. It catalyses the reaction 2 (2R)-3-phosphoglycerate + 2 H(+) = D-ribulose 1,5-bisphosphate + CO2 + H2O. The enzyme catalyses D-ribulose 1,5-bisphosphate + O2 = 2-phosphoglycolate + (2R)-3-phosphoglycerate + 2 H(+). In terms of biological role, ruBisCO catalyzes two reactions: the carboxylation of D-ribulose 1,5-bisphosphate, the primary event in carbon dioxide fixation, as well as the oxidative fragmentation of the pentose substrate in the photorespiration process. Both reactions occur simultaneously and in competition at the same active site. In Darlingtonia californica (California pitcher plant), this protein is Ribulose bisphosphate carboxylase large chain.